A 228-amino-acid chain; its full sequence is Elongation factor 1-beta 1 (228 aa).

An N-acetylalanine modification is found at A2. A GST C-terminal domain is found at 14-65 (LKTLEEHLAGKTYISGDQLSVDDVKVYAAVLENPGDGFPNASKWYDSVASHL). Residues 75–139 (GVRVGGGVAP…DTKKTKESGK (65 aa)) are disordered. The span at 95 to 115 (PAADGDGDDDDDIDLFADETE) shows a compositional bias: acidic residues. Positions 116-138 (DEKKAAEEREAAKKDTKKTKESG) are enriched in basic and acidic residues.

It belongs to the EF-1-beta/EF-1-delta family. EF-1 is composed of 4 subunits: alpha, beta (1B-alpha=beta'), delta (1B-beta), and gamma (1B-gamma).

Its subcellular location is the cell membrane. Functionally, EF-1-beta and EF-1-delta stimulate the exchange of GDP bound to EF-1-alpha to GTP. The polypeptide is Elongation factor 1-beta 1 (Arabidopsis thaliana (Mouse-ear cress)).